The chain runs to 385 residues: Polyketide synthase 3 (385 aa).

Cysteine 157 is an active-site residue.

The protein belongs to the thiolase-like superfamily. Chalcone/stilbene synthases family. As to expression, expressed in male and female flowers, and seedlings.

The protein resides in the cytoplasm. Its function is as follows. Polyketide synthase responsible for the biosynthesis of secondary metabolites. The polypeptide is Polyketide synthase 3 (PKSF3) (Cannabis sativa (Hemp)).